The chain runs to 1216 residues: Apical endosomal glycoprotein (1216 aa).

Positions 1 to 21 (MCLPSCLLSIWVLFMAAQSLG) are cleaved as a signal peptide. The Extracellular portion of the chain corresponds to 22 to 1155 (KTWVPDHCRS…SQGRVAAPVS (1134 aa)). The LDL-receptor class A 1; truncated domain maps to 27 to 54 (DHCRSPTEATCNFVCDCGDCSDEAQCGF). One can recognise an MAM 1 domain in the interval 62 to 224 (NTPFTCNFEQ…DDMEFWDCGL (163 aa)). Asn205 carries an N-linked (GlcNAc...) asparagine glycan. Positions 229–269 (ARCPLGHHHCQNKACVEPHQLCDGEDNCGDSSDEDPLICSH) constitute an LDL-receptor class A 2 domain. 3 disulfides stabilise this stretch: Cys231–Cys243, Cys238–Cys256, and Cys250–Cys267. Positions 268-427 (SHHMATDFET…DLIMSNHCIL (160 aa)) constitute an MAM 2 domain. N-linked (GlcNAc...) asparagine glycosylation is found at Asn291, Asn341, and Asn368. The 38-residue stretch at 454-491 (RTCDAGHLSCDELCVPPEQLCDFQQHCAEGEDEEKCGT) folds into the LDL-receptor class A 3 domain. Disulfide bonds link Cys456/Cys467, Cys463/Cys480, and Cys474/Cys489. 4 consecutive MAM domains span residues 492 to 647 (TDFE…DCNP), 654 to 813 (DQEV…PCWA), 812 to 973 (WAAK…PCAQ), and 972 to 1142 (AQPG…HCKQ). Asn639 carries an N-linked (GlcNAc...) asparagine glycan. Asn839 is a glycosylation site (N-linked (GlcNAc...) asparagine). Residues 1156 to 1176 (VPVAVGGALLLFLLLLGLGGW) traverse the membrane as a helical segment. The Cytoplasmic portion of the chain corresponds to 1177 to 1216 (HWLQKQHLPCQSTDAAASGFDNILFNADQVTLPESITSNP).

As to expression, apical endosomal tubules of developing rat intestinal epithelial cells.

Its subcellular location is the membrane. Functionally, probably involved in the sorting and selective transport of receptors and ligands across polarized epithelia. The chain is Apical endosomal glycoprotein (Mamdc4) from Rattus norvegicus (Rat).